A 552-amino-acid chain; its full sequence is Hyaluronan synthase 2 (552 aa).

Topologically, residues 1–11 (MHCERFLCVLR) are cytoplasmic. Residues 12-32 (IIGTTLFGVSLLLGITAAYIV) form a helical membrane-spanning segment. Over 33–45 (GYQFIQTDNYYFS) the chain is Extracellular. A helical transmembrane segment spans residues 46-66 (FGLYGAFLASHLIIQSLFAFL). Topologically, residues 67 to 374 (EHRKMKKSLE…NAMWFHKHHL (308 aa)) are cytoplasmic. Threonine 110 is modified (phosphothreonine). Lysine 190 participates in a covalent cross-link: Glycyl lysine isopeptide (Lys-Gly) (interchain with G-Cter in ubiquitin). An O-linked (GlcNAc) serine glycan is attached at serine 221. Threonine 328 is modified (phosphothreonine). A helical transmembrane segment spans residues 375–395 (WMTYEAVITGFFPFFLIATVI). Residues 396–402 (QLFYRGK) are Extracellular-facing. Residues 403–423 (IWNILLFLLTVQLVGLIKSSF) form a helical membrane-spanning segment. At 424–429 (ASCLRG) the chain is on the cytoplasmic side. Residues 430 to 450 (NIVMVFMSLYSVLYMSSLLPA) form a helical membrane-spanning segment. The Extracellular portion of the chain corresponds to 451-475 (KMFAIATINKAGWGTSGRKTIVVNF). The helical transmembrane segment at 476 to 496 (IGLIPVSVWFTILLGGVIFTI) threads the bilayer. The Cytoplasmic segment spans residues 497–510 (YKESKKPFSESKQT). Residues 511-531 (VLIVGTLIYACYWVVLLTLYV) form a helical membrane-spanning segment. Residues 532-552 (VLINKCGRRKKGQQYDMVLDV) lie on the Extracellular side of the membrane.

Belongs to the NodC/HAS family. Homodimer; dimerization promotes enzymatic activity. Forms heterodimer with HAS3. Forms heterodimer with HAS1. Requires Mg(2+) as cofactor. Phosphorylation at Thr-328 is essential for hyaluronan synthase activity. Post-translationally, O-GlcNAcylation at Ser-221 increases the stability of HAS2 and plasma membrane localization. In terms of processing, ubiquitination at Lys-190; this ubiquitination is essential for hyaluronan synthase activity and homo- or hetero-oligomerization. Can also be poly-ubiquitinated. Deubiquitinated by USP17L22/USP17 and USP4. USP17L22/USP17 efficiently removes 'Lys-63'- and 'Lys-48'-linked polyubiquitin chains, whereas USP4 preferentially removes monoubiquitination and, partially, both 'Lys-63'- and 'Lys-48'-linked polyubiquitin chain.

The protein localises to the cell membrane. The protein resides in the endoplasmic reticulum membrane. It is found in the vesicle. Its subcellular location is the golgi apparatus membrane. It localises to the lysosome. It carries out the reaction [hyaluronan](n) + UDP-N-acetyl-alpha-D-glucosamine = N-acetyl-beta-D-glucosaminyl-(1-&gt;4)-[hyaluronan](n) + UDP + H(+). The enzyme catalyses N-acetyl-beta-D-glucosaminyl-(1-&gt;4)-[hyaluronan](n) + UDP-alpha-D-glucuronate = [hyaluronan](n+1) + UDP + H(+). The protein operates within glycan biosynthesis; hyaluronan biosynthesis. In terms of biological role, catalyzes the addition of GlcNAc or GlcUA monosaccharides to the nascent hyaluronan polymer. Therefore, it is essential to hyaluronan synthesis a major component of most extracellular matrices that has a structural role in tissues architectures and regulates cell adhesion, migration and differentiation. This is one of three isoenzymes responsible for cellular hyaluronan synthesis and it is particularly responsible for the synthesis of high molecular mass hyaluronan. This is Hyaluronan synthase 2 (Has2) from Rattus norvegicus (Rat).